A 227-amino-acid polypeptide reads, in one-letter code: Uracil-DNA glycosylase (227 aa).

Residue Asp65 is the Proton acceptor of the active site.

Belongs to the uracil-DNA glycosylase (UDG) superfamily. UNG family.

It localises to the cytoplasm. The enzyme catalyses Hydrolyzes single-stranded DNA or mismatched double-stranded DNA and polynucleotides, releasing free uracil.. Functionally, excises uracil residues from the DNA which can arise as a result of misincorporation of dUMP residues by DNA polymerase or due to deamination of cytosine. In Lactobacillus delbrueckii subsp. bulgaricus (strain ATCC 11842 / DSM 20081 / BCRC 10696 / JCM 1002 / NBRC 13953 / NCIMB 11778 / NCTC 12712 / WDCM 00102 / Lb 14), this protein is Uracil-DNA glycosylase.